We begin with the raw amino-acid sequence, 151 residues long: D-aminoacyl-tRNA deacylase (151 aa).

A Gly-cisPro motif, important for rejection of L-amino acids motif is present at residues 138-139 (GP).

The protein belongs to the DTD family. As to quaternary structure, homodimer.

The protein localises to the cytoplasm. It catalyses the reaction glycyl-tRNA(Ala) + H2O = tRNA(Ala) + glycine + H(+). The catalysed reaction is a D-aminoacyl-tRNA + H2O = a tRNA + a D-alpha-amino acid + H(+). In terms of biological role, an aminoacyl-tRNA editing enzyme that deacylates mischarged D-aminoacyl-tRNAs. Also deacylates mischarged glycyl-tRNA(Ala), protecting cells against glycine mischarging by AlaRS. Acts via tRNA-based rather than protein-based catalysis; rejects L-amino acids rather than detecting D-amino acids in the active site. By recycling D-aminoacyl-tRNA to D-amino acids and free tRNA molecules, this enzyme counteracts the toxicity associated with the formation of D-aminoacyl-tRNA entities in vivo and helps enforce protein L-homochirality. The sequence is that of D-aminoacyl-tRNA deacylase from Picosynechococcus sp. (strain ATCC 27264 / PCC 7002 / PR-6) (Agmenellum quadruplicatum).